A 480-amino-acid chain; its full sequence is UDP-N-acetylmuramate--L-alanine ligase (480 aa).

Residue 129-135 (GSHGKTT) coordinates ATP.

The protein belongs to the MurCDEF family.

It is found in the cytoplasm. It carries out the reaction UDP-N-acetyl-alpha-D-muramate + L-alanine + ATP = UDP-N-acetyl-alpha-D-muramoyl-L-alanine + ADP + phosphate + H(+). The protein operates within cell wall biogenesis; peptidoglycan biosynthesis. Cell wall formation. This Syntrophus aciditrophicus (strain SB) protein is UDP-N-acetylmuramate--L-alanine ligase.